We begin with the raw amino-acid sequence, 232 residues long: tRNA (guanine-N(1)-)-methyltransferase (232 aa).

S-adenosyl-L-methionine contacts are provided by residues glycine 111 and isoleucine 131–leucine 136.

The protein belongs to the RNA methyltransferase TrmD family. As to quaternary structure, homodimer.

It is found in the cytoplasm. The catalysed reaction is guanosine(37) in tRNA + S-adenosyl-L-methionine = N(1)-methylguanosine(37) in tRNA + S-adenosyl-L-homocysteine + H(+). Specifically methylates guanosine-37 in various tRNAs. In Bartonella bacilliformis (strain ATCC 35685 / KC583 / Herrer 020/F12,63), this protein is tRNA (guanine-N(1)-)-methyltransferase.